The primary structure comprises 283 residues: Bifunctional protein FolD (283 aa).

NADP(+) is bound by residues 166 to 168 (GAS) and isoleucine 232.

The protein belongs to the tetrahydrofolate dehydrogenase/cyclohydrolase family. As to quaternary structure, homodimer.

It catalyses the reaction (6R)-5,10-methylene-5,6,7,8-tetrahydrofolate + NADP(+) = (6R)-5,10-methenyltetrahydrofolate + NADPH. It carries out the reaction (6R)-5,10-methenyltetrahydrofolate + H2O = (6R)-10-formyltetrahydrofolate + H(+). It functions in the pathway one-carbon metabolism; tetrahydrofolate interconversion. Its function is as follows. Catalyzes the oxidation of 5,10-methylenetetrahydrofolate to 5,10-methenyltetrahydrofolate and then the hydrolysis of 5,10-methenyltetrahydrofolate to 10-formyltetrahydrofolate. This Mannheimia succiniciproducens (strain KCTC 0769BP / MBEL55E) protein is Bifunctional protein FolD.